The primary structure comprises 113 residues: MLMQPLMMSDNPDDESDLGLLTKTRPRTQRPPRYKVLLLNDDYTPMEFVVIVLERFFGLNHAQAFEIMLTVHKKGLAVVGVFSHEVAETKVAQVMDYARRHQHPLQCTMEKDD.

Residues 1-26 form a disordered region; that stretch reads MLMQPLMMSDNPDDESDLGLLTKTRP.

This sequence belongs to the ClpS family. Binds to the N-terminal domain of the chaperone ClpA.

Its function is as follows. Involved in the modulation of the specificity of the ClpAP-mediated ATP-dependent protein degradation. This chain is ATP-dependent Clp protease adapter protein ClpS, found in Ruegeria sp. (strain TM1040) (Silicibacter sp.).